We begin with the raw amino-acid sequence, 641 residues long: Soluble starch synthase 1, chloroplastic/amyloplastic (641 aa).

Residue Lys-145 coordinates ADP-alpha-D-glucose.

Belongs to the glycosyltransferase 1 family. Bacterial/plant glycogen synthase subfamily. As to expression, high expression in leaves and very low in tubers.

The protein resides in the plastid. It localises to the chloroplast. It is found in the amyloplast. The enzyme catalyses [(1-&gt;4)-alpha-D-glucosyl](n) + ADP-alpha-D-glucose = [(1-&gt;4)-alpha-D-glucosyl](n+1) + ADP + H(+). Its pathway is glycan biosynthesis; starch biosynthesis. Functionally, plays a minor role in starch synthesis in storage organs (tubers), but may contribute to the deposition of transient starch in chloroplasts of leaves. The chain is Soluble starch synthase 1, chloroplastic/amyloplastic from Solanum tuberosum (Potato).